The chain runs to 828 residues: Zinc finger protein 438 (828 aa).

Disordered stretches follow at residues 1–29 (MQNS…KGLQ), 143–173 (KSGC…LYKP), and 193–231 (ALTN…PAKQ). Composition is skewed to polar residues over residues 16-29 (NIPS…KGLQ) and 150-159 (PAQTQMCPQM). 3 C2H2-type zinc fingers span residues 507 to 529 (HRCH…MNTH), 535 to 557 (YSCR…MKLH), and 567 to 590 (MCCE…KEVH). The segment at 680-721 (EGTFPGSKGTQEELVQHASPDWKRHPERGKPEKVHSSSEESH) is disordered. Positions 689-721 (TQEELVQHASPDWKRHPERGKPEKVHSSSEESH) are enriched in basic and acidic residues. The segment at 776–799 (FNCLLCAEMLGRKEDLLHHWKHQH) adopts a C2H2-type 4 zinc-finger fold.

It belongs to the krueppel C2H2-type zinc-finger protein family. In terms of tissue distribution, ubiquitous.

It localises to the nucleus. Isoform 1 acts as a transcriptional repressor. The polypeptide is Zinc finger protein 438 (ZNF438) (Homo sapiens (Human)).